We begin with the raw amino-acid sequence, 176 residues long: Ribosome maturation factor RimM (176 aa).

Positions 99-173 constitute a PRC barrel domain; it reads ADEYYWHDLL…TMTITPLEGL (75 aa).

It belongs to the RimM family. In terms of assembly, binds ribosomal protein uS19.

The protein localises to the cytoplasm. In terms of biological role, an accessory protein needed during the final step in the assembly of 30S ribosomal subunit, possibly for assembly of the head region. Essential for efficient processing of 16S rRNA. May be needed both before and after RbfA during the maturation of 16S rRNA. It has affinity for free ribosomal 30S subunits but not for 70S ribosomes. The protein is Ribosome maturation factor RimM of Trichlorobacter lovleyi (strain ATCC BAA-1151 / DSM 17278 / SZ) (Geobacter lovleyi).